A 564-amino-acid chain; its full sequence is Oxalyl-CoA decarboxylase (564 aa).

Residues isoleucine 32 and tyrosine 118 each coordinate substrate. The ADP site is built by arginine 158 and lysine 220. A substrate-binding site is contributed by 261–265; it reads AAARS. ADP is bound by residues arginine 280, aspartate 302, and isoleucine 322. Asparagine 355 contributes to the substrate binding site. Thiamine diphosphate is bound by residues tyrosine 372 and 396–398; that span reads ANT. Residue 403 to 404 participates in substrate binding; it reads RN. 421–423 provides a ligand contact to thiamine diphosphate; sequence GVM. Aspartate 447 is a Mg(2+) binding site. 448-449 provides a ligand contact to thiamine diphosphate; the sequence is SA. Mg(2+) is bound by residues asparagine 474 and glycine 476. Residue tyrosine 478 participates in thiamine diphosphate binding. 550–552 is a binding site for substrate; sequence SGH.

The protein belongs to the TPP enzyme family. As to quaternary structure, homotetramer; dimer of dimers. It depends on Mg(2+) as a cofactor. Thiamine diphosphate serves as cofactor.

The catalysed reaction is oxalyl-CoA + H(+) = formyl-CoA + CO2. It functions in the pathway metabolic intermediate degradation; oxalate degradation; CO(2) and formate from oxalate: step 2/2. Involved in the catabolism of oxalate and in the adapatation to low pH via the induction of the oxalate-dependent acid tolerance response (ATR). Catalyzes the decarboxylation of oxalyl-CoA to yield carbon dioxide and formyl-CoA. This chain is Oxalyl-CoA decarboxylase (oxc), found in Escherichia coli O157:H7.